The following is a 107-amino-acid chain: Homeobox protein HD-3 (107 aa).

The segment at residues 6-65 is a DNA-binding region (homeobox); sequence SKAPRTRMTAGQTRVLMSFFKDNPFPSTTAREKLSKVLGVGPRTVQIWFQNQRQKARGQA.

The protein localises to the nucleus. The chain is Homeobox protein HD-3 (HD-3) from Encephalitozoon cuniculi (strain GB-M1) (Microsporidian parasite).